The chain runs to 387 residues: Galactokinase (387 aa).

A substrate-binding site is contributed by 33–36 (EHTD). Residues S67 and 124–130 (GAGLSSS) contribute to the ATP site. Residues S130 and E162 each contribute to the Mg(2+) site. D174 serves as the catalytic Proton acceptor. Y224 is a binding site for substrate.

The protein belongs to the GHMP kinase family. GalK subfamily.

It is found in the cytoplasm. The catalysed reaction is alpha-D-galactose + ATP = alpha-D-galactose 1-phosphate + ADP + H(+). The protein operates within carbohydrate metabolism; galactose metabolism. Its function is as follows. Catalyzes the transfer of the gamma-phosphate of ATP to D-galactose to form alpha-D-galactose-1-phosphate (Gal-1-P). The chain is Galactokinase from Lactiplantibacillus plantarum (strain ATCC BAA-793 / NCIMB 8826 / WCFS1) (Lactobacillus plantarum).